A 283-amino-acid polypeptide reads, in one-letter code: tRNA-cytidine(32) 2-sulfurtransferase (283 aa).

The PP-loop motif signature appears at 49–54 (SGGKDS). 3 residues coordinate [4Fe-4S] cluster: Cys-124, Cys-127, and Cys-215.

This sequence belongs to the TtcA family. Homodimer. The cofactor is Mg(2+). [4Fe-4S] cluster is required as a cofactor.

It is found in the cytoplasm. It catalyses the reaction cytidine(32) in tRNA + S-sulfanyl-L-cysteinyl-[cysteine desulfurase] + AH2 + ATP = 2-thiocytidine(32) in tRNA + L-cysteinyl-[cysteine desulfurase] + A + AMP + diphosphate + H(+). Its pathway is tRNA modification. Its function is as follows. Catalyzes the ATP-dependent 2-thiolation of cytidine in position 32 of tRNA, to form 2-thiocytidine (s(2)C32). The sulfur atoms are provided by the cysteine/cysteine desulfurase (IscS) system. The sequence is that of tRNA-cytidine(32) 2-sulfurtransferase from Acaryochloris marina (strain MBIC 11017).